Here is a 208-residue protein sequence, read N- to C-terminus: Protein-L-isoaspartate O-methyltransferase (208 aa).

Ser-59 is a catalytic residue.

Belongs to the methyltransferase superfamily. L-isoaspartyl/D-aspartyl protein methyltransferase family.

It is found in the cytoplasm. It catalyses the reaction [protein]-L-isoaspartate + S-adenosyl-L-methionine = [protein]-L-isoaspartate alpha-methyl ester + S-adenosyl-L-homocysteine. In terms of biological role, catalyzes the methyl esterification of L-isoaspartyl residues in peptides and proteins that result from spontaneous decomposition of normal L-aspartyl and L-asparaginyl residues. It plays a role in the repair and/or degradation of damaged proteins. The protein is Protein-L-isoaspartate O-methyltransferase of Pectobacterium atrosepticum (strain SCRI 1043 / ATCC BAA-672) (Erwinia carotovora subsp. atroseptica).